The chain runs to 273 residues: MTKDIMDAVFIKEMAKTTSNLYRLGWDERNGGNITYLLDEKEVAEYLDVKQIIRTIPMDFDGKKLAGKYFLVTGSGKYFKNVEEAPAVNLGVIQVSEDGKAVHLLWGYTDGGLPTSELPAHFMSHIARLSVDPENRVVMHCHATHLLAMTFTHELTERAFTRTLWQMCTECLVVFPEGVGIIPWLVPGTNEIGEATSEKMKENRLIVWPHHGIYGAGQSMDETFGLIETAEKAAEVYTIVMSQGGIKQAITDEQLKALGERFGVEAKAGYLNN.

Residue Glu-117 is part of the active site. Positions 140, 142, and 211 each coordinate Zn(2+).

Belongs to the aldolase class II family. RhaD subfamily. Zn(2+) is required as a cofactor.

The protein resides in the cytoplasm. The enzyme catalyses L-rhamnulose 1-phosphate = (S)-lactaldehyde + dihydroxyacetone phosphate. Its pathway is carbohydrate degradation; L-rhamnose degradation; glycerone phosphate from L-rhamnose: step 3/3. In terms of biological role, catalyzes the reversible cleavage of L-rhamnulose-1-phosphate to dihydroxyacetone phosphate (DHAP) and L-lactaldehyde. This is Rhamnulose-1-phosphate aldolase from Listeria monocytogenes serovar 1/2a (strain ATCC BAA-679 / EGD-e).